Reading from the N-terminus, the 213-residue chain is Large ribosomal subunit protein uL1 (213 aa).

Belongs to the universal ribosomal protein uL1 family. Part of the 50S ribosomal subunit.

Binds directly to 23S rRNA. Probably involved in E site tRNA release. Functionally, protein L1 is also a translational repressor protein, it controls the translation of its operon by binding to its mRNA. This is Large ribosomal subunit protein uL1 from Picrophilus torridus (strain ATCC 700027 / DSM 9790 / JCM 10055 / NBRC 100828 / KAW 2/3).